The following is a 340-amino-acid chain: Holliday junction branch migration complex subunit RuvB (340 aa).

A large ATPase domain (RuvB-L) region spans residues Met-1 to Tyr-183. ATP is bound by residues Leu-22, Arg-23, Gly-64, Lys-67, Thr-68, Thr-69, Glu-130–Phe-132, Arg-173, Tyr-183, and Arg-220. Thr-68 serves as a coordination point for Mg(2+). Positions Ala-184–Glu-254 are small ATPAse domain (RuvB-S). The segment at Asp-257–Phe-340 is head domain (RuvB-H). Positions 312 and 317 each coordinate DNA.

This sequence belongs to the RuvB family. As to quaternary structure, homohexamer. Forms an RuvA(8)-RuvB(12)-Holliday junction (HJ) complex. HJ DNA is sandwiched between 2 RuvA tetramers; dsDNA enters through RuvA and exits via RuvB. An RuvB hexamer assembles on each DNA strand where it exits the tetramer. Each RuvB hexamer is contacted by two RuvA subunits (via domain III) on 2 adjacent RuvB subunits; this complex drives branch migration. In the full resolvosome a probable DNA-RuvA(4)-RuvB(12)-RuvC(2) complex forms which resolves the HJ.

Its subcellular location is the cytoplasm. The catalysed reaction is ATP + H2O = ADP + phosphate + H(+). Its function is as follows. The RuvA-RuvB-RuvC complex processes Holliday junction (HJ) DNA during genetic recombination and DNA repair, while the RuvA-RuvB complex plays an important role in the rescue of blocked DNA replication forks via replication fork reversal (RFR). RuvA specifically binds to HJ cruciform DNA, conferring on it an open structure. The RuvB hexamer acts as an ATP-dependent pump, pulling dsDNA into and through the RuvAB complex. RuvB forms 2 homohexamers on either side of HJ DNA bound by 1 or 2 RuvA tetramers; 4 subunits per hexamer contact DNA at a time. Coordinated motions by a converter formed by DNA-disengaged RuvB subunits stimulates ATP hydrolysis and nucleotide exchange. Immobilization of the converter enables RuvB to convert the ATP-contained energy into a lever motion, pulling 2 nucleotides of DNA out of the RuvA tetramer per ATP hydrolyzed, thus driving DNA branch migration. The RuvB motors rotate together with the DNA substrate, which together with the progressing nucleotide cycle form the mechanistic basis for DNA recombination by continuous HJ branch migration. Branch migration allows RuvC to scan DNA until it finds its consensus sequence, where it cleaves and resolves cruciform DNA. This Syntrophus aciditrophicus (strain SB) protein is Holliday junction branch migration complex subunit RuvB.